The following is a 380-amino-acid chain: Queuine tRNA-ribosyltransferase (380 aa).

D96 acts as the Proton acceptor in catalysis. Substrate is bound by residues 96–100 (DSGGF), D150, Q193, and G220. An RNA binding region spans residues 251-257 (GVGAPDS). Residue D270 is the Nucleophile of the active site. The interval 275 to 279 (TRIAR) is RNA binding; important for wobble base 34 recognition. C308, C310, C313, and H339 together coordinate Zn(2+).

It belongs to the queuine tRNA-ribosyltransferase family. As to quaternary structure, homodimer. Within each dimer, one monomer is responsible for RNA recognition and catalysis, while the other monomer binds to the replacement base PreQ1. Requires Zn(2+) as cofactor.

The catalysed reaction is 7-aminomethyl-7-carbaguanine + guanosine(34) in tRNA = 7-aminomethyl-7-carbaguanosine(34) in tRNA + guanine. The protein operates within tRNA modification; tRNA-queuosine biosynthesis. Catalyzes the base-exchange of a guanine (G) residue with the queuine precursor 7-aminomethyl-7-deazaguanine (PreQ1) at position 34 (anticodon wobble position) in tRNAs with GU(N) anticodons (tRNA-Asp, -Asn, -His and -Tyr). Catalysis occurs through a double-displacement mechanism. The nucleophile active site attacks the C1' of nucleotide 34 to detach the guanine base from the RNA, forming a covalent enzyme-RNA intermediate. The proton acceptor active site deprotonates the incoming PreQ1, allowing a nucleophilic attack on the C1' of the ribose to form the product. After dissociation, two additional enzymatic reactions on the tRNA convert PreQ1 to queuine (Q), resulting in the hypermodified nucleoside queuosine (7-(((4,5-cis-dihydroxy-2-cyclopenten-1-yl)amino)methyl)-7-deazaguanosine). The sequence is that of Queuine tRNA-ribosyltransferase from Streptococcus mutans serotype c (strain ATCC 700610 / UA159).